The primary structure comprises 359 residues: Dual-specificity RNA methyltransferase RlmN (359 aa).

The active-site Proton acceptor is glutamate 90. Positions histidine 109–aspartate 342 constitute a Radical SAM core domain. An intrachain disulfide couples cysteine 116 to cysteine 347. Positions 123, 127, and 130 each coordinate [4Fe-4S] cluster. S-adenosyl-L-methionine contacts are provided by residues glycine 173 to glutamate 174, serine 205, serine 228 to histidine 230, and asparagine 304. The active-site S-methylcysteine intermediate is the cysteine 347.

The protein belongs to the radical SAM superfamily. RlmN family. Requires [4Fe-4S] cluster as cofactor.

It is found in the cytoplasm. It carries out the reaction adenosine(2503) in 23S rRNA + 2 reduced [2Fe-2S]-[ferredoxin] + 2 S-adenosyl-L-methionine = 2-methyladenosine(2503) in 23S rRNA + 5'-deoxyadenosine + L-methionine + 2 oxidized [2Fe-2S]-[ferredoxin] + S-adenosyl-L-homocysteine. The enzyme catalyses adenosine(37) in tRNA + 2 reduced [2Fe-2S]-[ferredoxin] + 2 S-adenosyl-L-methionine = 2-methyladenosine(37) in tRNA + 5'-deoxyadenosine + L-methionine + 2 oxidized [2Fe-2S]-[ferredoxin] + S-adenosyl-L-homocysteine. In terms of biological role, specifically methylates position 2 of adenine 2503 in 23S rRNA and position 2 of adenine 37 in tRNAs. m2A2503 modification seems to play a crucial role in the proofreading step occurring at the peptidyl transferase center and thus would serve to optimize ribosomal fidelity. This chain is Dual-specificity RNA methyltransferase RlmN, found in Sulfurovum sp. (strain NBC37-1).